The following is a 100-amino-acid chain: Co-chaperonin GroES (100 aa).

This sequence belongs to the GroES chaperonin family. As to quaternary structure, heptamer of 7 subunits arranged in a ring. Interacts with the chaperonin GroEL.

Its subcellular location is the cytoplasm. Its function is as follows. Together with the chaperonin GroEL, plays an essential role in assisting protein folding. The GroEL-GroES system forms a nano-cage that allows encapsulation of the non-native substrate proteins and provides a physical environment optimized to promote and accelerate protein folding. GroES binds to the apical surface of the GroEL ring, thereby capping the opening of the GroEL channel. The chain is Co-chaperonin GroES from Mycolicibacterium smegmatis (strain ATCC 700084 / mc(2)155) (Mycobacterium smegmatis).